Consider the following 290-residue polypeptide: Enoyl-CoA hydratase, mitochondrial (290 aa).

The transit peptide at 1-27 (MAALRALLPRVRAPLRPWLFCPVQRSF) directs the protein to the mitochondrion. Substrate contacts are provided by residues 98 to 101 (ADIK) and glycine 141. Lysine 101 carries the post-translational modification N6-acetyllysine; alternate. Residue lysine 101 is modified to N6-succinyllysine; alternate. Lysine 204 is subject to N6-succinyllysine. At lysine 211 the chain carries N6-acetyllysine.

Belongs to the enoyl-CoA hydratase/isomerase family. Homohexamer; dimer of trimers.

The protein resides in the mitochondrion matrix. It catalyses the reaction a (3S)-3-hydroxyacyl-CoA = a (2E)-enoyl-CoA + H2O. It carries out the reaction a (3E)-enoyl-CoA = a 4-saturated (2E)-enoyl-CoA. The enzyme catalyses (3E)-hexenoyl-CoA = (2E)-hexenoyl-CoA. The catalysed reaction is (3S)-3-hydroxybutanoyl-CoA = (2E)-butenoyl-CoA + H2O. It catalyses the reaction 3-hydroxyisovaleryl-CoA = 3-methylbut-2-enoyl-CoA + H2O. It carries out the reaction 3-hydroxypropanoyl-CoA = acryloyl-CoA + H2O. The enzyme catalyses 3-hydroxybutanoyl-CoA = (2E)-butenoyl-CoA + H2O. The catalysed reaction is 2-methylpropenoyl-CoA + H2O = (S)-3-hydroxyisobutanoyl-CoA. It catalyses the reaction (3S)-hydroxyhexanoyl-CoA = (2E)-hexenoyl-CoA + H2O. It carries out the reaction (3S)-hydroxydecanoyl-CoA = (2E)-decenoyl-CoA + H2O. It functions in the pathway lipid metabolism; fatty acid beta-oxidation. Its function is as follows. Converts unsaturated trans-2-enoyl-CoA species ((2E)-enoyl-CoA) to the corresponding 3(S)-3-hydroxyacyl-CoA species through addition of a water molecule to the double bond. Catalyzes the hydration of medium- and short-chained fatty enoyl-CoA thioesters from 4 carbons long (C4) up to C16. Has high substrate specificity for crotonyl-CoA ((2E)-butenoyl-CoA) and moderate specificity for acryloyl-CoA, 3-methylcrotonyl-CoA (3-methyl-(2E)-butenoyl-CoA) and methacrylyl-CoA ((2E)-2-methylpropenoyl-CoA). Can bind tiglyl-CoA (2-methylcrotonoyl-CoA), but hydrates only a small amount of this substrate. Plays a key role in the beta-oxidation spiral of short- and medium-chain fatty acid oxidation. At a lower rate than the hydratase reaction, catalyzes the isomerase reaction of trans-3-enoyl-CoA species (such as (3E)-hexenoyl-CoA) to trans-2-enoyl-CoA species (such as (2E)-hexenoyl-CoA), which are subsequently hydrated to 3(S)-3-hydroxyacyl-CoA species (such as (3S)-hydroxyhexanoyl-CoA). This is Enoyl-CoA hydratase, mitochondrial (ECHS1) from Bos taurus (Bovine).